Reading from the N-terminus, the 345-residue chain is uncharacterized protein (345 aa).

2 disordered regions span residues 1–24 (MGLE…ENRK) and 296–345 (MTAH…LNES). A compositionally biased stretch (acidic residues) spans 304 to 323 (SDYDNDDDTDGIINETDYEL). The segment covering 324-345 (DTSQSEFATLTTSSNKSILNES) has biased composition (polar residues).

This is an uncharacterized protein from Schizosaccharomyces pombe (strain 972 / ATCC 24843) (Fission yeast).